Consider the following 76-residue polypeptide: UPF0352 protein ECA2748 (76 aa).

It belongs to the UPF0352 family.

The protein is UPF0352 protein ECA2748 of Pectobacterium atrosepticum (strain SCRI 1043 / ATCC BAA-672) (Erwinia carotovora subsp. atroseptica).